The sequence spans 281 residues: Putative E3 ubiquitin-protein ligase SINA-like 6 (281 aa).

Residues 1-26 (MVGVLLSERNGSQKRHCSSISSDDGR) are disordered. An RING-type zinc finger spans residues 45 to 81 (CPICYQALKIPVFQCGNGHLACSSCCPKLRNKCPACA). The tract at residues 95–280 (VLESVLVPCR…MMLCINELKQ (186 aa)) is SBD. Residues 98–156 (SVLVPCRYADLGCTKTIYYGRESTHEKICNFSPCSCPVQGCNYTGSYKDLYEHYDLTHS) form an SIAH-type zinc finger. The Zn(2+) site is built by Cys-103, Cys-110, His-122, Cys-126, Cys-133, Cys-138, His-150, and His-155.

The protein belongs to the SINA (Seven in absentia) family.

The catalysed reaction is S-ubiquitinyl-[E2 ubiquitin-conjugating enzyme]-L-cysteine + [acceptor protein]-L-lysine = [E2 ubiquitin-conjugating enzyme]-L-cysteine + N(6)-ubiquitinyl-[acceptor protein]-L-lysine.. The protein operates within protein modification; protein ubiquitination. E3 ubiquitin-protein ligase that mediates ubiquitination and subsequent proteasomal degradation of target proteins. E3 ubiquitin ligases accept ubiquitin from an E2 ubiquitin-conjugating enzyme in the form of a thioester and then directly transfers the ubiquitin to targeted substrates. It probably triggers the ubiquitin-mediated degradation of different substrates. This chain is Putative E3 ubiquitin-protein ligase SINA-like 6, found in Arabidopsis thaliana (Mouse-ear cress).